We begin with the raw amino-acid sequence, 338 residues long: Solute carrier family 35 member G6 (338 aa).

Residues 1 to 25 are disordered; it reads MAGSHPYLNPPDSTHPSPPSAPPSL. 9 helical membrane passes run 40–60, 67–87, 105–125, 160–180, 190–210, 221–241, 255–275, 281–301, and 310–330; these read LLVA…LSHM, LPSL…ALLL, YFYA…VQVV, CGLL…LWTL, ALGY…LLVY, TVAF…LFVL, CVGA…YAVT, LVCA…YYML, and IVGA…NLSC. Residues 49 to 174 form the EamA 1 domain; sequence LPAGFVGPLS…SILGLIIIVG (126 aa). The EamA 2 domain occupies 272 to 325; the sequence is YAVTKAHPALVCAVLHSEVVVALILQYYMLHETVAPSDIVGAGVVLGSIAIITA.

This sequence belongs to the SLC35G solute transporter family. As to expression, expressed in placenta and testis.

The protein localises to the membrane. The sequence is that of Solute carrier family 35 member G6 (SLC35G6) from Homo sapiens (Human).